A 139-amino-acid polypeptide reads, in one-letter code: Large ribosomal subunit protein bL20 (139 aa).

This sequence belongs to the bacterial ribosomal protein bL20 family.

Binds directly to 23S ribosomal RNA and is necessary for the in vitro assembly process of the 50S ribosomal subunit. It is not involved in the protein synthesizing functions of that subunit. The polypeptide is Large ribosomal subunit protein bL20 (Leuconostoc citreum (strain KM20)).